The sequence spans 330 residues: Clavaminate synthase-like protein At3g21360 (330 aa).

Alanine 2 is subject to N-acetylalanine. Residues histidine 120, glutamate 122, and histidine 313 each coordinate Fe cation.

Fe cation serves as cofactor.

The chain is Clavaminate synthase-like protein At3g21360 from Arabidopsis thaliana (Mouse-ear cress).